The primary structure comprises 841 residues: DNA ligase (841 aa).

Residues 54–58 (DAEYD), 103–104 (SL), and E143 contribute to the NAD(+) site. The active-site N6-AMP-lysine intermediate is K145. 4 residues coordinate NAD(+): R166, E203, K321, and K345. Residues C471, C474, C489, and C495 each contribute to the Zn(2+) site. A disordered region spans residues 554–575 (KTVAESDQMPSEGSSVGASGKH). Residues 561–570 (QMPSEGSSVG) are compositionally biased toward polar residues. The 78-residue stretch at 764–841 (GINKAVAGKT…SEAELLTLLG (78 aa)) folds into the BRCT domain.

Belongs to the NAD-dependent DNA ligase family. LigA subfamily. Mg(2+) serves as cofactor. The cofactor is Mn(2+).

It carries out the reaction NAD(+) + (deoxyribonucleotide)n-3'-hydroxyl + 5'-phospho-(deoxyribonucleotide)m = (deoxyribonucleotide)n+m + AMP + beta-nicotinamide D-nucleotide.. In terms of biological role, DNA ligase that catalyzes the formation of phosphodiester linkages between 5'-phosphoryl and 3'-hydroxyl groups in double-stranded DNA using NAD as a coenzyme and as the energy source for the reaction. It is essential for DNA replication and repair of damaged DNA. This chain is DNA ligase, found in Neisseria meningitidis serogroup C (strain 053442).